The primary structure comprises 692 residues: Elongation factor G 2 (692 aa).

In terms of domain architecture, tr-type G spans 8–283; sequence KDVRNIGIMA…GVVNYLPSPL (276 aa). Residues 17–24, 81–85, and 135–138 contribute to the GTP site; these read AHIDAGKT, DTPGH, and NKMD.

Belongs to the TRAFAC class translation factor GTPase superfamily. Classic translation factor GTPase family. EF-G/EF-2 subfamily.

It is found in the cytoplasm. Its function is as follows. Catalyzes the GTP-dependent ribosomal translocation step during translation elongation. During this step, the ribosome changes from the pre-translocational (PRE) to the post-translocational (POST) state as the newly formed A-site-bound peptidyl-tRNA and P-site-bound deacylated tRNA move to the P and E sites, respectively. Catalyzes the coordinated movement of the two tRNA molecules, the mRNA and conformational changes in the ribosome. The chain is Elongation factor G 2 from Desulfotalea psychrophila (strain LSv54 / DSM 12343).